We begin with the raw amino-acid sequence, 110 residues long: MIDLEVYVEKERHNPLLRRREVYCRLSFEGKTPSRKEVRGKIAGLMNAEPERVVVDYIKTEFGKTEAKCYVKIYDTVEDLQKIEEEHIIERNKVEEQAEEAEEAEAGAAE.

The interval 91 to 110 (RNKVEEQAEEAEEAEAGAAE) is disordered. The segment covering 97-110 (QAEEAEEAEAGAAE) has biased composition (acidic residues).

Belongs to the eukaryotic ribosomal protein eS24 family.

This is Small ribosomal subunit protein eS24 from Archaeoglobus fulgidus (strain ATCC 49558 / DSM 4304 / JCM 9628 / NBRC 100126 / VC-16).